Reading from the N-terminus, the 762-residue chain is 5-methyltetrahydropteroyltriglutamate--homocysteine methyltransferase (762 aa).

5-methyltetrahydropteroyltri-L-glutamate-binding positions include 17 to 20 (REWK) and lysine 111. Residues 435–437 (IGS) and glutamate 488 each bind L-homocysteine. L-methionine contacts are provided by residues 435 to 437 (IGS) and glutamate 488. 5-methyltetrahydropteroyltri-L-glutamate contacts are provided by residues 519–520 (RC) and tryptophan 565. Aspartate 603 lines the L-homocysteine pocket. Aspartate 603 provides a ligand contact to L-methionine. Glutamate 609 is a 5-methyltetrahydropteroyltri-L-glutamate binding site. Residues histidine 645, cysteine 647, and glutamate 669 each coordinate Zn(2+). Residue histidine 698 is the Proton donor of the active site. Cysteine 730 is a Zn(2+) binding site.

The protein belongs to the vitamin-B12 independent methionine synthase family. Zn(2+) serves as cofactor.

The enzyme catalyses 5-methyltetrahydropteroyltri-L-glutamate + L-homocysteine = tetrahydropteroyltri-L-glutamate + L-methionine. The protein operates within amino-acid biosynthesis; L-methionine biosynthesis via de novo pathway; L-methionine from L-homocysteine (MetE route): step 1/1. Functionally, catalyzes the transfer of a methyl group from 5-methyltetrahydrofolate to homocysteine resulting in methionine formation. In Bacillus anthracis (strain CDC 684 / NRRL 3495), this protein is 5-methyltetrahydropteroyltriglutamate--homocysteine methyltransferase.